The following is a 194-amino-acid chain: Probable thymidylate kinase (194 aa).

Gly-8–Thr-15 contributes to the ATP binding site.

Belongs to the thymidylate kinase family.

It catalyses the reaction dTMP + ATP = dTDP + ADP. This Sulfolobus acidocaldarius (strain ATCC 33909 / DSM 639 / JCM 8929 / NBRC 15157 / NCIMB 11770) protein is Probable thymidylate kinase.